Consider the following 114-residue polypeptide: Ribosome-binding factor A (114 aa).

The protein belongs to the RbfA family. As to quaternary structure, monomer. Binds 30S ribosomal subunits, but not 50S ribosomal subunits or 70S ribosomes.

It is found in the cytoplasm. One of several proteins that assist in the late maturation steps of the functional core of the 30S ribosomal subunit. Associates with free 30S ribosomal subunits (but not with 30S subunits that are part of 70S ribosomes or polysomes). Required for efficient processing of 16S rRNA. May interact with the 5'-terminal helix region of 16S rRNA. The chain is Ribosome-binding factor A from Vesicomyosocius okutanii subsp. Calyptogena okutanii (strain HA).